The primary structure comprises 475 residues: ESX-3 secretion system protein EccD3 (475 aa).

11 consecutive transmembrane segments (helical) span residues 132 to 152 (IARGAALALIGLILVGTGLSV), 161 to 181 (LLGQFIVSGIALATVIAALAV), 186 to 206 (AVLATSLAVTALVPVAAAFAL), 212 to 232 (FGAPNVLLAAAGVAAWSLISM), 241 to 261 (IAVFTATAVTGVGVLLVAGAA), 264 to 284 (WVISSDVIGCALVLLGLIVTV), 333 to 353 (GVIAAGVLLGVAGSVALVSSA), 354 to 374 (NASPWAWYIVVAAAAGAALRA), 384 to 404 (AWLLGHSYLLAVALLVAFVIG), 409 to 429 (AALWALAALAVLVLVWIVAAL), and 453 to 473 (GLDASLIPVMALLVGLFSLVL).

It belongs to the EccD/Snm4 family. Part of the ESX-3 / type VII secretion system (T7SS), which is composed of cytosolic and membrane components. The ESX-3 membrane complex is composed of EccB3, EccC3, EccD3 and EccE3.

It is found in the cell inner membrane. Its function is as follows. Part of the ESX-3 specialized secretion system, which is required for siderophore-mediated iron acquisition and for the secretion of EsxH and EsxG. The polypeptide is ESX-3 secretion system protein EccD3 (Mycolicibacterium smegmatis (strain ATCC 700084 / mc(2)155) (Mycobacterium smegmatis)).